The sequence spans 239 residues: Small ribosomal subunit protein uS3 (239 aa).

Positions 39-107 constitute a KH type-2 domain; it reads VRQVLRKKMS…PVHINVIEVR (69 aa). The interval 214–239 is disordered; the sequence is SQEKQDDGSRGDRNADRSSRRSREVR. Basic and acidic residues predominate over residues 216–239; sequence EKQDDGSRGDRNADRSSRRSREVR.

The protein belongs to the universal ribosomal protein uS3 family. In terms of assembly, part of the 30S ribosomal subunit. Forms a tight complex with proteins S10 and S14.

Functionally, binds the lower part of the 30S subunit head. Binds mRNA in the 70S ribosome, positioning it for translation. The polypeptide is Small ribosomal subunit protein uS3 (Xylella fastidiosa (strain M23)).